We begin with the raw amino-acid sequence, 440 residues long: Phosphatidylcholine-sterol acyltransferase (440 aa).

The signal sequence occupies residues 1–24; it reads MGPPGSPWQWVTLLLGLLLPPAAP. N44 carries an N-linked (GlcNAc...) (complex) asparagine glycan. C74 and C98 form a disulfide bridge. Residue N108 is glycosylated (N-linked (GlcNAc...) (complex) asparagine). The active-site Nucleophile is the S205. N296 carries N-linked (GlcNAc...) (complex) asparagine glycosylation. A disulfide bridge connects residues C337 and C380. Catalysis depends on charge relay system residues D369 and H401. The N-linked (GlcNAc...) (complex) asparagine glycan is linked to N408. T431 carries an O-linked (GalNAc...) threonine glycan. A glycan (O-linked (GalNAc...) serine) is linked at S433.

This sequence belongs to the AB hydrolase superfamily. Lipase family. Post-translationally, O- and N-glycosylated. O-glycosylation on Thr-431 and Ser-433 consists of sialylated galactose beta 1--&gt;3N-acetylgalactosamine structures. N-glycosylated sites contain sialylated triantennary and/or biantennary complex structures. Detected in blood plasma. Detected in cerebral spinal fluid (at protein level). Detected in liver. Expressed mainly in brain, liver and testes.

Its subcellular location is the secreted. The catalysed reaction is a sterol + a 1,2-diacyl-sn-glycero-3-phosphocholine = a sterol ester + a 1-acyl-sn-glycero-3-phosphocholine. It catalyses the reaction a 1-O-alkyl-2-acetyl-sn-glycero-3-phosphocholine + H2O = a 1-O-alkyl-sn-glycero-3-phosphocholine + acetate + H(+). The enzyme catalyses a 1-hexadecanoyl-2-acyl-sn-glycero-3-phosphocholine + (24S)-hydroxycholesterol = (24S)-24-hydroxycholesterol ester + 1-hexadecanoyl-sn-glycero-3-phosphocholine. It carries out the reaction (24S)-hydroxycholesterol + 1-hexadecanoyl-2-(9Z,12Z-octadecadienoyl)-sn-glycero-3-phosphocholine = (24S)-hydroxycholesterol 3-linoleoate + 1-hexadecanoyl-sn-glycero-3-phosphocholine. The catalysed reaction is 1-hexadecanoyl-2-(5Z,8Z,11Z,14Z-eicosatetraenoyl)-sn-glycero-3-phosphocholine + cholesterol = cholesteryl (5Z,8Z,11Z,14Z)-eicosatetraenoate + 1-hexadecanoyl-sn-glycero-3-phosphocholine. It catalyses the reaction 1-hexadecanoyl-2-(9Z-octadecenoyl)-sn-glycero-3-phosphocholine + cholesterol = cholesteryl (9Z-octadecenoate) + 1-hexadecanoyl-sn-glycero-3-phosphocholine. The enzyme catalyses 1-hexadecanoyl-2-(8Z,11Z,14Z-eicosatrienoyl)-sn-glycero-3-phosphocholine + cholesterol = cholesteryl (8Z,11Z,14Z)-eicosatrienoate + 1-hexadecanoyl-sn-glycero-3-phosphocholine. It carries out the reaction 1-hexadecanoyl-2-(5Z,8Z,11Z-eicosatrienoyl)-sn-glycero-3-phosphocholine + cholesterol = cholesteryl (5Z,8Z,11Z)-eicosatrienoate + 1-hexadecanoyl-sn-glycero-3-phosphocholine. The catalysed reaction is 1-hexadecanoyl-2-(5Z,8Z,11Z,14Z,17Z-eicosapentaenoyl)-sn-glycero-3-phosphocholine + cholesterol = (5Z,8Z,11Z,14Z,17Z-eicosapentaenoyl)-cholesterol + 1-hexadecanoyl-sn-glycero-3-phosphocholine. It catalyses the reaction 1-hexadecanoyl-2-(9Z,12Z-octadecadienoyl)-sn-glycero-3-phosphocholine + cholesterol = cholesteryl (9Z,12Z)-octadecadienoate + 1-hexadecanoyl-sn-glycero-3-phosphocholine. The enzyme catalyses 1-hexadecanoyl-2-(6Z,9Z,12Z-octadecatrienoyl)-sn-glycero-3-phosphocholine + cholesterol = (6Z,9Z,12Z-octadecatrienoyl)-cholesterol + 1-hexadecanoyl-sn-glycero-3-phosphocholine. It carries out the reaction 1-hexadecanoyl-2-(11Z,14Z,17Z-eicosatrienoyl)-sn-glycero-3-phosphocholine + cholesterol = (11Z,14Z,17Z-eicosatrienoyl)-cholesterol + 1-hexadecanoyl-sn-glycero-3-phosphocholine. The catalysed reaction is 1-hexadecanoyl-2-(9Z,12Z,15Z-octadecatrienoyl)-sn-glycero-3-phosphocholine + cholesterol = (9Z,12Z,15Z-octadecatrienoyl)-cholesterol + 1-hexadecanoyl-sn-glycero-3-phosphocholine. It catalyses the reaction 1-hexadecanoyl-2-(9Z,12Z-octadecadienoyl)-sn-glycero-3-phosphocholine + H2O = (9Z,12Z)-octadecadienoate + 1-hexadecanoyl-sn-glycero-3-phosphocholine + H(+). The enzyme catalyses 1-hexadecanoyl-2-(5Z,8Z,11Z,14Z-eicosatetraenoyl)-sn-glycero-3-phosphocholine + H2O = 1-hexadecanoyl-sn-glycero-3-phosphocholine + (5Z,8Z,11Z,14Z)-eicosatetraenoate + H(+). It carries out the reaction a 1-O-alkyl-2-acetyl-sn-glycero-3-phosphocholine + 1-hexadecanoyl-sn-glycero-3-phosphocholine = 1-hexadecanoyl-2-acetyl-sn-glycero-3-phosphocholine + a 1-O-alkyl-sn-glycero-3-phosphocholine. APOA1 is the most potent activator in plasma. Also activated by APOE, APOC1 and APOA4. Inhibited by haptoglobin and 5,5'-dithiobis-(2-nitrobenzoic acid) (DTNB). Its function is as follows. Central enzyme in the extracellular metabolism of plasma lipoproteins. Synthesized mainly in the liver and secreted into plasma where it converts cholesterol and phosphatidylcholines (lecithins) to cholesteryl esters and lysophosphatidylcholines on the surface of high and low density lipoproteins (HDLs and LDLs). The cholesterol ester is then transported back to the liver. Has a preference for plasma 16:0-18:2 or 18:O-18:2 phosphatidylcholines. Also produced in the brain by primary astrocytes, and esterifies free cholesterol on nascent APOE-containing lipoproteins secreted from glia and influences cerebral spinal fluid (CSF) APOE- and APOA1 levels. Together with APOE and the cholesterol transporter ABCA1, plays a key role in the maturation of glial-derived, nascent lipoproteins. Required for remodeling high-density lipoprotein particles into their spherical forms. Catalyzes the hydrolysis of 1-O-alkyl-2-acetyl-sn-glycero-3-phosphocholine (platelet-activating factor or PAF) to 1-O-alkyl-sn-glycero-3-phosphocholine (lyso-PAF). Also catalyzes the transfer of the acetate group from PAF to 1-hexadecanoyl-sn-glycero-3-phosphocholine forming lyso-PAF. Catalyzes the esterification of (24S)-hydroxycholesterol (24(S)OH-C), also known as cerebrosterol to produce 24(S)OH-C monoesters. This is Phosphatidylcholine-sterol acyltransferase (LCAT) from Homo sapiens (Human).